The following is a 500-amino-acid chain: Cytochrome c-552 (500 aa).

A signal peptide spans 1 to 24 (MKFLIKSLAVATISILGCLQTALA). Positions 102, 130, 133, 134, 168, 171, 172, 217, 220, and 221 each coordinate heme c. Residues E223, Y224, K268, and Q270 each coordinate Ca(2+). Y224 lines the substrate pocket. H271 lines the substrate pocket. Heme c is bound by residues H282, C289, C292, H293, H308, C321, C324, H325, and H400. A disordered region spans residues 477-500 (ARAKGLLPAEEADKPVAAPKAEAK).

Belongs to the cytochrome c-552 family. Ca(2+) serves as cofactor. It depends on heme c as a cofactor.

Its subcellular location is the periplasm. The enzyme catalyses 6 Fe(III)-[cytochrome c] + NH4(+) + 2 H2O = 6 Fe(II)-[cytochrome c] + nitrite + 8 H(+). It functions in the pathway nitrogen metabolism; nitrate reduction (assimilation). Functionally, catalyzes the reduction of nitrite to ammonia, consuming six electrons in the process. This chain is Cytochrome c-552, found in Mannheimia haemolytica (Pasteurella haemolytica).